A 358-amino-acid polypeptide reads, in one-letter code: tRNA-specific 2-thiouridylase MnmA (358 aa).

ATP is bound by residues 8 to 15 (GLSGGVDS) and Met34. Residues 94–96 (NPD) form an interaction with target base in tRNA region. The Nucleophile role is filled by Cys99. Cys99 and Cys196 are joined by a disulfide. Residue Gly123 coordinates ATP. The interval 146–148 (KDQ) is interaction with tRNA. The active-site Cysteine persulfide intermediate is Cys196. Residues 308–309 (RY) form an interaction with tRNA region.

The protein belongs to the MnmA/TRMU family.

It localises to the cytoplasm. The enzyme catalyses S-sulfanyl-L-cysteinyl-[protein] + uridine(34) in tRNA + AH2 + ATP = 2-thiouridine(34) in tRNA + L-cysteinyl-[protein] + A + AMP + diphosphate + H(+). Functionally, catalyzes the 2-thiolation of uridine at the wobble position (U34) of tRNA, leading to the formation of s(2)U34. The polypeptide is tRNA-specific 2-thiouridylase MnmA (Thiobacillus denitrificans (strain ATCC 25259 / T1)).